We begin with the raw amino-acid sequence, 533 residues long: CTP synthase (533 aa).

The segment at 1-265 (MTKFIFVTGG…ARYLVRRLGL (265 aa)) is amidoligase domain. Ser13 contacts CTP. Residue Ser13 coordinates UTP. 14-19 (GLGKGI) contributes to the ATP binding site. Tyr54 lines the L-glutamine pocket. Asp71 contributes to the ATP binding site. 2 residues coordinate Mg(2+): Asp71 and Glu139. Residues 146 to 148 (DIE), 186 to 191 (KTKPTQ), and Lys222 contribute to the CTP site. Residues 186-191 (KTKPTQ) and Lys222 each bind UTP. In terms of domain architecture, Glutamine amidotransferase type-1 spans 290 to 532 (EIAIVGKYVK…VRAARERKYG (243 aa)). Position 351 (Gly351) interacts with L-glutamine. Cys378 acts as the Nucleophile; for glutamine hydrolysis in catalysis. L-glutamine is bound by residues 379-382 (FGFQ), Glu402, and Arg459. Residues His505 and Glu507 contribute to the active site.

This sequence belongs to the CTP synthase family. Homotetramer.

It catalyses the reaction UTP + L-glutamine + ATP + H2O = CTP + L-glutamate + ADP + phosphate + 2 H(+). It carries out the reaction L-glutamine + H2O = L-glutamate + NH4(+). The catalysed reaction is UTP + NH4(+) + ATP = CTP + ADP + phosphate + 2 H(+). It functions in the pathway pyrimidine metabolism; CTP biosynthesis via de novo pathway; CTP from UDP: step 2/2. Its activity is regulated as follows. Allosterically activated by GTP, when glutamine is the substrate; GTP has no effect on the reaction when ammonia is the substrate. The allosteric effector GTP functions by stabilizing the protein conformation that binds the tetrahedral intermediate(s) formed during glutamine hydrolysis. Inhibited by the product CTP, via allosteric rather than competitive inhibition. Functionally, catalyzes the ATP-dependent amination of UTP to CTP with either L-glutamine or ammonia as the source of nitrogen. Regulates intracellular CTP levels through interactions with the four ribonucleotide triphosphates. The protein is CTP synthase of Thermococcus gammatolerans (strain DSM 15229 / JCM 11827 / EJ3).